Here is a 416-residue protein sequence, read N- to C-terminus: Pre-mRNA-splicing factor slu-7 (416 aa).

Residues 1–34 form a disordered region; that stretch reads MPPPPPNRREQATAAPSSTDKSETGAGAARKEDN. The CCHC-type zinc-finger motif lies at 95-112; it reads GACENCGAMGHKKKDCLE. 2 stretches are compositionally biased toward basic and acidic residues: residues 168–179 and 188–213; these read RRALQGDQKTPD and DDKS…QSMR. The tract at residues 168–213 is disordered; the sequence is RRALQGDQKTPDGEGADGPEDDKSGFKYDEESDMGRDRATTKQSMR.

This sequence belongs to the SLU7 family. Associated with the spliceosome.

It localises to the nucleus. In terms of biological role, involved in pre-mRNA splicing. The sequence is that of Pre-mRNA-splicing factor slu-7 (slu-7) from Neurospora crassa (strain ATCC 24698 / 74-OR23-1A / CBS 708.71 / DSM 1257 / FGSC 987).